Here is a 559-residue protein sequence, read N- to C-terminus: Poly(3-hydroxyalkanoate) polymerase 1 (559 aa).

Residue C296 is part of the active site.

Belongs to the PHA/PHB synthase family. Type II PhaC subfamily.

The protein operates within biopolymer metabolism; poly-(R)-3-hydroxybutanoate biosynthesis. Synthesizes poly(3-hydroxyalkanoates) (PHA), complements a mutant of P.putida that does not make PHA. The sequence is that of Poly(3-hydroxyalkanoate) polymerase 1 from Ectopseudomonas oleovorans (Pseudomonas oleovorans).